Consider the following 420-residue polypeptide: Hemojuvelin (420 aa).

The first 32 residues, 1–32 (MGQSPSPRSPHGSPPTLSTLTLLLLLCGQAHS), serve as a signal peptide directing secretion. Residue Y43 is modified to Phosphotyrosine. The N-linked (GlcNAc...) asparagine glycan is linked to N111. Residues 113 to 135 (SRQGPTAPPPARGPALPGAGPAP) are disordered. Low complexity predominate over residues 125 to 134 (GPALPGAGPA). 2 disulfide bridges follow: C141-C223 and C160-C310. Residues N206 and N365 are each glycosylated (N-linked (GlcNAc...) asparagine). The GPI-anchor amidated aspartate moiety is linked to residue D393. The propeptide at 394–420 (AGPPLSPAICLVPLLSALFVLWLCFSK) is removed in mature form.

It belongs to the repulsive guidance molecule (RGM) family. Interacts with BMP2 and BMP4. Interacts with BMP6. Interacts with BMPR1B. Interacts with TMPRSS6. Post-translationally, autocatalytically cleaved at low pH; the two chains remain linked via two disulfide bonds. Also proteolytically processed by TMPRSS6, several fragments being released in the extracellular space; regulates HJV activity in BMP signaling and thefore iron homeostasis. Muscle cell lineage.

The protein resides in the cell membrane. In terms of biological role, acts as a bone morphogenetic protein (BMP) coreceptor. Through enhancement of BMP signaling regulates hepcidin (HAMP) expression and regulates iron homeostasis. The sequence is that of Hemojuvelin from Mus musculus (Mouse).